We begin with the raw amino-acid sequence, 311 residues long: Pyrimidine-specific ribonucleoside hydrolase RihA (311 aa).

The active site involves His-240.

It belongs to the IUNH family. RihA subfamily.

In terms of biological role, hydrolyzes cytidine or uridine to ribose and cytosine or uracil, respectively. The protein is Pyrimidine-specific ribonucleoside hydrolase RihA of Salmonella paratyphi B (strain ATCC BAA-1250 / SPB7).